The primary structure comprises 282 residues: Putative 1-acyl-sn-glycerol-3-phosphate acyltransferase acl-2 (282 aa).

2 helical membrane passes run 4 to 24 (FWSI…NIST) and 32 to 52 (ISFY…TMIP). An HXXXXD motif motif is present at residues 98 to 103 (HQSSLD). A helical membrane pass occupies residues 122-142 (ILAYVPFFNLGAYFSNTIFID).

This sequence belongs to the 1-acyl-sn-glycerol-3-phosphate acyltransferase family.

The protein resides in the membrane. The catalysed reaction is a 1-acyl-sn-glycero-3-phosphate + an acyl-CoA = a 1,2-diacyl-sn-glycero-3-phosphate + CoA. The protein operates within phospholipid metabolism; CDP-diacylglycerol biosynthesis; CDP-diacylglycerol from sn-glycerol 3-phosphate: step 2/3. Its function is as follows. Converts lysophosphatidic acid (LPA) into phosphatidic acid by incorporating an acyl moiety at the sn-2 position of the glycerol backbone. This is Putative 1-acyl-sn-glycerol-3-phosphate acyltransferase acl-2 (acl-2) from Caenorhabditis elegans.